The sequence spans 179 residues: uncharacterized protein (179 aa).

Positions 26–39 (AAKLAAATTPTHTA) are enriched in low complexity. A disordered region spans residues 26–179 (AAKLAAATTP…RPRRNTLRHM (154 aa)). A compositionally biased stretch (polar residues) spans 150 to 165 (RQSVTQSTAARQTQPH). The span at 167–179 (GRPRPRRNTLRHM) shows a compositional bias: basic residues.

This is an uncharacterized protein from Equus caballus (Horse).